The chain runs to 480 residues: Vacuolar amino acid transporter 2 (480 aa).

The tract at residues 21 to 48 (LTNFPFPGTTDNDSDDGSQGQNSLNIIT) is disordered. Residues 37-46 (GSQGQNSLNI) are compositionally biased toward polar residues. 9 helical membrane passes run 72–92 (AFMNLANSILGAGIITQPFAI), 95–115 (AGILGGLLSYVALGFIVDWTL), 145–165 (LILFTNGLFAFGGCIGYCIII), 214–234 (LSKASFLAVISMIIIVLTVVI), 263–283 (LSVISFALVCHHNTSFIFFSM), 297–317 (ISIIISVICCALMGYSGFAVF), 338–358 (IARLCFGFNMLTTFPMEIFVL), 394–414 (VFITMGISLTTCNLGALFELI), and 447–467 (FYLCICFGFMIMIISSTQTII).

Belongs to the amino acid/polyamine transporter 2 family.

It localises to the vacuole membrane. Its function is as follows. Probable amino acid transporter of unknown specificity. This Saccharomyces cerevisiae (strain ATCC 204508 / S288c) (Baker's yeast) protein is Vacuolar amino acid transporter 2 (AVT2).